We begin with the raw amino-acid sequence, 282 residues long: Heme oxygenase 1, chloroplastic (282 aa).

Residues 1-56 (MASATVVSQIQSLYIIKPRLSPPPPPHRQFRSIYFPTTRLLQQHRFRQMKSVVIVP) constitute a chloroplast transit peptide. Heme b is bound at residue His-86.

Belongs to the heme oxygenase family. In terms of tissue distribution, highly expressed in root nodules and, to a lower extent, in leaves, shoots, roots, flowers and pods (at protein level).

It localises to the plastid. The protein resides in the chloroplast. The enzyme catalyses heme b + 3 reduced [NADPH--hemoprotein reductase] + 3 O2 = biliverdin IXalpha + CO + Fe(2+) + 3 oxidized [NADPH--hemoprotein reductase] + 3 H2O + H(+). Its function is as follows. Key enzyme in the synthesis of the chromophore of the phytochrome family of plant photoreceptors. Catalyzes the opening of the heme ring to form the open-chain tetrapyrrole biliverdin IX with the release of iron and carbon monoxide (CO). Produces specifically the biliverdin IX-alpha isomer. Can form complex with heme, is ferredoxin-dependent and its activity is increased in the presence of ascorbate. May affect the plastid-to-nucleus signaling pathway by perturbing tetrapyrrole synthesis. The plastid-to-nucleus signal plays an important role in the coordinated expression of both nuclear- and chloroplast-localized genes that encode photosynthesis-related proteins. Required for efficient symbiotic nitrogen fixation (SNF) in root nodules. Responsible for heme catabolism in uninfected nodule interstitial cells (UC), preventing superoxide production under stressful conditions (e.g. nitrate exposure and darkness) and catalyzing biliverdin (BV) production in senescing green nodules. The chain is Heme oxygenase 1, chloroplastic from Lotus japonicus (Lotus corniculatus var. japonicus).